We begin with the raw amino-acid sequence, 110 residues long: Large ribosomal subunit protein uL22 (110 aa).

Belongs to the universal ribosomal protein uL22 family. In terms of assembly, part of the 50S ribosomal subunit.

Functionally, this protein binds specifically to 23S rRNA; its binding is stimulated by other ribosomal proteins, e.g. L4, L17, and L20. It is important during the early stages of 50S assembly. It makes multiple contacts with different domains of the 23S rRNA in the assembled 50S subunit and ribosome. Its function is as follows. The globular domain of the protein is located near the polypeptide exit tunnel on the outside of the subunit, while an extended beta-hairpin is found that lines the wall of the exit tunnel in the center of the 70S ribosome. The sequence is that of Large ribosomal subunit protein uL22 from Nitrosomonas eutropha (strain DSM 101675 / C91 / Nm57).